A 1755-amino-acid chain; its full sequence is Transposon Ty1-DR5 Gag-Pol polyprotein (1755 aa).

3 stretches are compositionally biased toward polar residues: residues 1–10 (MESQQLSNYP), 48–60 (TKAN…TPAS), and 127–152 (QSQF…GNTF). Disordered regions lie at residues 1–93 (MESQ…MMTQ), 126–173 (PQSQ…RPPP), and 352–421 (GSRN…SKST). Residues 153-165 (TDSSSADSDMTST) are compositionally biased toward low complexity. The RNA-binding stretch occupies residues 299–401 (NNGIHINNKV…NSKSKTARAH (103 aa)). Residues 402 to 418 (NVSTSNNSPSTDNDSIS) are compositionally biased toward low complexity. Catalysis depends on Asp461, which acts as the For protease activity; shared with dimeric partner. An integrase-type zinc finger-like region spans residues 583-640 (NVHTSESTRKYPYPFIHRMLAHANAQTIRYSLKNNTITYFNESDVDWSSAIDYQCPDC). In terms of domain architecture, Integrase catalytic spans 660–835 (NSYEPFQYLH…AGLDISTLLP (176 aa)). Positions 671 and 736 each coordinate Mg(2+). Disordered stretches follow at residues 956 to 1087 (SKAV…ETEK), 1092 to 1111 (RSPS…NIVP), and 1130 to 1187 (DLPL…DNET). A compositionally biased stretch (low complexity) spans 960-969 (SPTDSTPPST). The span at 1005–1015 (STPQISNIEST) shows a compositional bias: polar residues. The segment covering 1038–1053 (ESSHASKSKDFRHSDS) has biased composition (basic and acidic residues). 2 stretches are compositionally biased toward polar residues: residues 1054 to 1082 (YSEN…QISD) and 1101 to 1111 (PENNSSHNIVP). The Bipartite nuclear localization signal signature appears at 1178–1212 (KKRSLEDNETEIKVSRDTWNTKNMRSLEPPRSKKR). The Reverse transcriptase Ty1/copia-type domain occupies 1338–1476 (NNYYITQLDI…DILGLEIKYQ (139 aa)). Mg(2+)-binding residues include Asp1346, Asp1427, Asp1428, Asp1610, Glu1652, and Asp1685. Positions 1610 to 1752 (DASYGNQPYY…IKTFKLLTNK (143 aa)) constitute an RNase H Ty1/copia-type domain.

The capsid protein forms a homotrimer, from which the VLPs are assembled. The protease is a homodimer, whose active site consists of two apposed aspartic acid residues. In terms of processing, initially, virus-like particles (VLPs) are composed of the structural unprocessed proteins Gag and Gag-Pol, and also contain the host initiator methionine tRNA (tRNA(i)-Met) which serves as a primer for minus-strand DNA synthesis, and a dimer of genomic Ty RNA. Processing of the polyproteins occurs within the particle and proceeds by an ordered pathway, called maturation. First, the protease (PR) is released by autocatalytic cleavage of the Gag-Pol polyprotein yielding capsid protein p45 and a Pol-p154 precursor protein. This cleavage is a prerequisite for subsequent processing of Pol-p154 at the remaining sites to release the mature structural and catalytic proteins. Maturation takes place prior to the RT reaction and is required to produce transposition-competent VLPs.

The protein localises to the cytoplasm. The protein resides in the nucleus. It carries out the reaction DNA(n) + a 2'-deoxyribonucleoside 5'-triphosphate = DNA(n+1) + diphosphate. The enzyme catalyses Endonucleolytic cleavage to 5'-phosphomonoester.. Its function is as follows. Capsid protein (CA) is the structural component of the virus-like particle (VLP), forming the shell that encapsulates the retrotransposons dimeric RNA genome. The particles are assembled from trimer-clustered units and there are holes in the capsid shells that allow for the diffusion of macromolecules. CA also has nucleocapsid-like chaperone activity, promoting primer tRNA(i)-Met annealing to the multipartite primer-binding site (PBS), dimerization of Ty1 RNA and initiation of reverse transcription. Functionally, the aspartyl protease (PR) mediates the proteolytic cleavages of the Gag and Gag-Pol polyproteins after assembly of the VLP. In terms of biological role, reverse transcriptase/ribonuclease H (RT) is a multifunctional enzyme that catalyzes the conversion of the retro-elements RNA genome into dsDNA within the VLP. The enzyme displays a DNA polymerase activity that can copy either DNA or RNA templates, and a ribonuclease H (RNase H) activity that cleaves the RNA strand of RNA-DNA heteroduplexes during plus-strand synthesis and hydrolyzes RNA primers. The conversion leads to a linear dsDNA copy of the retrotransposon that includes long terminal repeats (LTRs) at both ends. Integrase (IN) targets the VLP to the nucleus, where a subparticle preintegration complex (PIC) containing at least integrase and the newly synthesized dsDNA copy of the retrotransposon must transit the nuclear membrane. Once in the nucleus, integrase performs the integration of the dsDNA into the host genome. This Saccharomyces cerevisiae (strain ATCC 204508 / S288c) (Baker's yeast) protein is Transposon Ty1-DR5 Gag-Pol polyprotein (TY1B-DR5).